The chain runs to 349 residues: Bifunctional nitrilase/nitrile hydratase NIT4A (349 aa).

Residues V29–L301 enclose the CN hydrolase domain. The active-site Proton acceptor is the E69. K156 is an active-site residue. The active-site Nucleophile is C190.

The protein belongs to the carbon-nitrogen hydrolase superfamily. Nitrilase family. Ubiquitous.

It catalyses the reaction L-asparagine = 3-cyano-L-alanine + H2O. The catalysed reaction is 3-cyano-L-alanine + 2 H2O = L-aspartate + NH4(+). Functionally, involved in the cyanide detoxification pathway. Has nitrilase and nitrile-hydratase activity in the ratio 4.0:1, producing both asparagine and aspartic acid from beta-cyano-L-alanine (Ala(CN)). Can also use 3-phenylpropionitrile as substrate, but not indole-3-acetonitrile. This Lupinus angustifolius (Narrow-leaved blue lupine) protein is Bifunctional nitrilase/nitrile hydratase NIT4A (NIT4A).